We begin with the raw amino-acid sequence, 272 residues long: Putative hydro-lyase Rpal_1947 (272 aa).

It belongs to the D-glutamate cyclase family.

This is Putative hydro-lyase Rpal_1947 from Rhodopseudomonas palustris (strain TIE-1).